The primary structure comprises 162 residues: Sec-independent protein translocase protein TatB (162 aa).

The chain crosses the membrane as a helical span at residues 1–21; it reads MFDLGWTELLVIGVVALIVVG. 2 disordered regions span residues 69–111 and 124–162; these read ATNP…DRAE and AADR…ETKA. 2 stretches are compositionally biased toward basic and acidic residues: residues 83–111 and 124–141; these read ATRD…DRAE and AADR…KAEE. Over residues 144 to 155 the composition is skewed to low complexity; that stretch reads AALSATPASTAS.

This sequence belongs to the TatB family. As to quaternary structure, the Tat system comprises two distinct complexes: a TatABC complex, containing multiple copies of TatA, TatB and TatC subunits, and a separate TatA complex, containing only TatA subunits. Substrates initially bind to the TatABC complex, which probably triggers association of the separate TatA complex to form the active translocon.

It is found in the cell inner membrane. Part of the twin-arginine translocation (Tat) system that transports large folded proteins containing a characteristic twin-arginine motif in their signal peptide across membranes. Together with TatC, TatB is part of a receptor directly interacting with Tat signal peptides. TatB may form an oligomeric binding site that transiently accommodates folded Tat precursor proteins before their translocation. The sequence is that of Sec-independent protein translocase protein TatB from Ruegeria sp. (strain TM1040) (Silicibacter sp.).